The primary structure comprises 20 residues: Dihydrolipoamide-residue succinyltransferase component of 2-oxoglutarate dehydrogenase complex (20 aa).

The protein belongs to the 2-oxoacid dehydrogenase family. Forms a 24-polypeptide structural core with octahedral symmetry. (R)-lipoate serves as cofactor.

It localises to the mitochondrion membrane. The enzyme catalyses N(6)-[(R)-dihydrolipoyl]-L-lysyl-[protein] + succinyl-CoA = N(6)-[(R)-S(8)-succinyldihydrolipoyl]-L-lysyl-[protein] + CoA. It participates in amino-acid degradation; L-lysine degradation via saccharopine pathway; glutaryl-CoA from L-lysine: step 6/6. Functionally, the 2-oxoglutarate dehydrogenase complex catalyzes the overall conversion of 2-oxoglutarate to succinyl-CoA and CO(2). It contains multiple copies of three enzymatic components: 2-oxoglutarate dehydrogenase (E1), dihydrolipoamide succinyltransferase (E2) and lipoamide dehydrogenase (E3). This chain is Dihydrolipoamide-residue succinyltransferase component of 2-oxoglutarate dehydrogenase complex, found in Solanum tuberosum (Potato).